Reading from the N-terminus, the 596-residue chain is UvrABC system protein C (596 aa).

One can recognise a GIY-YIG domain in the interval 14 to 91 (DQPGCYLMKD…IKLHDPKYNV (78 aa)). The UVR domain maps to 196–231 (EAVKKELEVKMLAAAENLEFERAKEFRDQIAHIDTV).

The protein belongs to the UvrC family. Interacts with UvrB in an incision complex.

It localises to the cytoplasm. The UvrABC repair system catalyzes the recognition and processing of DNA lesions. UvrC both incises the 5' and 3' sides of the lesion. The N-terminal half is responsible for the 3' incision and the C-terminal half is responsible for the 5' incision. This Lysinibacillus sphaericus (strain C3-41) protein is UvrABC system protein C.